A 615-amino-acid polypeptide reads, in one-letter code: Chaperone protein HtpG (615 aa).

Residues 1–335 (MSAEKQTHGF…APDLPLNVSR (335 aa)) form an a; substrate-binding region. The tract at residues 336 to 541 (ELLQDYGPVQ…EDQLGPQMRR (206 aa)) is b. A c region spans residues 542–615 (MLEAAGQPVP…RMQALLSQSV (74 aa)).

This sequence belongs to the heat shock protein 90 family. Homodimer.

Its subcellular location is the cytoplasm. Its function is as follows. Molecular chaperone. Has ATPase activity. The polypeptide is Chaperone protein HtpG (Alcanivorax borkumensis (strain ATCC 700651 / DSM 11573 / NCIMB 13689 / SK2)).